Here is a 413-residue protein sequence, read N- to C-terminus: Aspartate aminotransferase, cytoplasmic (413 aa).

L-aspartate is bound by residues Gly-39 and Trp-141. Ser-149 is subject to Phosphoserine. Asn-195 serves as a coordination point for L-aspartate. Lys-259 carries the N6-(pyridoxal phosphate)lysine modification. An L-aspartate-binding site is contributed by Arg-387.

This sequence belongs to the class-I pyridoxal-phosphate-dependent aminotransferase family. In terms of assembly, homodimer. Requires pyridoxal 5'-phosphate as cofactor.

It localises to the cytoplasm. The enzyme catalyses L-aspartate + 2-oxoglutarate = oxaloacetate + L-glutamate. The catalysed reaction is L-cysteine + 2-oxoglutarate = 2-oxo-3-sulfanylpropanoate + L-glutamate. It catalyses the reaction (2S)-2-aminobutanoate + 2-oxoglutarate = 2-oxobutanoate + L-glutamate. It carries out the reaction 3-sulfino-L-alanine + 2-oxoglutarate = 3-sulfinopyruvate + L-glutamate. Its function is as follows. Biosynthesis of L-glutamate from L-aspartate or L-cysteine. Important regulator of levels of glutamate, the major excitatory neurotransmitter of the vertebrate central nervous system. Acts as a scavenger of glutamate in brain neuroprotection. The aspartate aminotransferase activity is involved in hepatic glucose synthesis during development and in adipocyte glyceroneogenesis. Using L-cysteine as substrate, regulates levels of mercaptopyruvate, an important source of hydrogen sulfide. Mercaptopyruvate is converted into H(2)S via the action of 3-mercaptopyruvate sulfurtransferase (3MST). Hydrogen sulfide is an important synaptic modulator and neuroprotectant in the brain. The polypeptide is Aspartate aminotransferase, cytoplasmic (Pongo abelii (Sumatran orangutan)).